We begin with the raw amino-acid sequence, 336 residues long: Anthranilate phosphoribosyltransferase (336 aa).

5-phospho-alpha-D-ribose 1-diphosphate is bound by residues Gly-79, 82-83, Thr-87, 89-92, 107-115, and Ala-119; these read GD, NIST, and KHGNRCVSS. Gly-79 contributes to the anthranilate binding site. Ser-91 serves as a coordination point for Mg(2+). Residue Asn-110 participates in anthranilate binding. Anthranilate is bound at residue Arg-165. Mg(2+) is bound by residues Asp-224 and Glu-225.

The protein belongs to the anthranilate phosphoribosyltransferase family. In terms of assembly, homodimer. It depends on Mg(2+) as a cofactor.

It catalyses the reaction N-(5-phospho-beta-D-ribosyl)anthranilate + diphosphate = 5-phospho-alpha-D-ribose 1-diphosphate + anthranilate. It functions in the pathway amino-acid biosynthesis; L-tryptophan biosynthesis; L-tryptophan from chorismate: step 2/5. Catalyzes the transfer of the phosphoribosyl group of 5-phosphorylribose-1-pyrophosphate (PRPP) to anthranilate to yield N-(5'-phosphoribosyl)-anthranilate (PRA). This is Anthranilate phosphoribosyltransferase from Lachnoclostridium phytofermentans (strain ATCC 700394 / DSM 18823 / ISDg) (Clostridium phytofermentans).